The following is a 194-amino-acid chain: Phosphoheptose isomerase (194 aa).

The SIS domain occupies 37–194; it reads ISNSFKQGGK…LIEFEMAKQA (158 aa). 52 to 54 lines the substrate pocket; sequence NGG. Residues His61 and Glu65 each coordinate Zn(2+). Substrate is bound by residues Glu65, 93-94, 119-121, Ser124, and Gln172; these read ND and STS. Zn(2+) contacts are provided by Gln172 and His180.

It belongs to the SIS family. GmhA subfamily. In terms of assembly, homotetramer. The cofactor is Zn(2+).

The protein localises to the cytoplasm. The enzyme catalyses 2 D-sedoheptulose 7-phosphate = D-glycero-alpha-D-manno-heptose 7-phosphate + D-glycero-beta-D-manno-heptose 7-phosphate. It functions in the pathway carbohydrate biosynthesis; D-glycero-D-manno-heptose 7-phosphate biosynthesis; D-glycero-alpha-D-manno-heptose 7-phosphate and D-glycero-beta-D-manno-heptose 7-phosphate from sedoheptulose 7-phosphate: step 1/1. It participates in bacterial outer membrane biogenesis; LOS core biosynthesis. Catalyzes the isomerization of sedoheptulose 7-phosphate in D-glycero-D-manno-heptose 7-phosphate. The polypeptide is Phosphoheptose isomerase (Haemophilus influenzae (strain ATCC 51907 / DSM 11121 / KW20 / Rd)).